A 477-amino-acid polypeptide reads, in one-letter code: Dihydrolipoyl dehydrogenase (477 aa).

FAD contacts are provided by residues 41-50, lysine 59, glycine 124, and 153-155; these read EKRGALGGTC and TGS. Cysteine 50 and cysteine 55 are oxidised to a cystine. Residues 190-197, glutamate 213, valine 248, and glycine 282 each bind NAD(+); that span reads GGGVIGLE. FAD contacts are provided by residues aspartate 323 and 330-333; that span reads MLAH. Catalysis depends on histidine 456, which acts as the Proton acceptor.

The protein belongs to the class-I pyridine nucleotide-disulfide oxidoreductase family. Homodimer. Requires FAD as cofactor.

It catalyses the reaction N(6)-[(R)-dihydrolipoyl]-L-lysyl-[protein] + NAD(+) = N(6)-[(R)-lipoyl]-L-lysyl-[protein] + NADH + H(+). The chain is Dihydrolipoyl dehydrogenase (LPD) from Trypanosoma cruzi.